The sequence spans 593 residues: Regulatory protein NPR1 (593 aa).

Phosphoserine occurs at positions 11, 15, 55, and 59. In terms of domain architecture, BTB spans 65-144 (SDAKLVLSDG…VYSSRVRPPP (80 aa)). Residues 147-161 (VSECADENCCHVACR) form a C2HC NPR-type zinc finger. Zn(2+)-binding residues include Cys-150 and Cys-155. Cys-156 carries the post-translational modification S-nitrosocysteine. Zn(2+) contacts are provided by His-157 and Cys-160. 5 ANK repeats span residues 229–258 (KSNVDMVSLEKSLPEELVKEIIDRRKELGL), 265–295 (KHVSNVHKALDSDDIELVKLLLKEDHTNLDD), 297–324 (CALHFAVAYCNVKTATDLLKLDLADVNH), 328–357 (RGYTVLHVAAMRKEPQLILSLLEKGASASE), and 361–397 (EGRTALMIAKQATMAVECNNIPEQCKHSLKGRLCVEI). Positions 345-348 (ILSL) match the SIM3, required fo binding to SUMO3 and subsequent sumoylation motif. The tract at residues 387 to 525 (HSLKGRLCVE…DQIMNCEDLT (139 aa)) is salicylic acid-binding core (SBC). Arg-432 is a binding site for salicylate. Residues 537 to 554 (KRLQKKQRYMEIQETLKK) carry the Nuclear localization signal motif. Residues 563-593 (LGNSSLTDSTSSTSKSTGGKRSNRKLSHRRR) form a disordered region. The segment covering 566–579 (SSLTDSTSSTSKST) has biased composition (low complexity). Over residues 583-593 (RSNRKLSHRRR) the composition is skewed to basic residues.

The protein belongs to the plant 'ANKYRIN-BTB/POZ' family. 'NPR1-like' subfamily. In terms of assembly, homodimer. Oligomer of dimers in an uninduced quiescent state; disulfide-linked. Forms activated (i.e. sumoylated) homodimers and monomers upon systemic acquired resistance (SAR) induction. Interacts with TGA1, TGA3, TGA4, TGA5, TGA6, TGA7 and with reduced forms of TGA1 and TGA4. Activated homodimer binds two TGA3 dimers in the presence of DNA via its ANK 2 repeat (265-295), thus forming a TGA3(2)-NPR1(2)-TGA3(2) complex in which NPR1 serves as a transcription cofactor by bridging two transcription factor complexes in an enhanceosome. Interacts with NIMIN-1 and NIMIN-3 via its C-terminal region, and with NIMIN-2 via its N-terminal region. Interacts with SUMO3 but not with SUMO1 and SUMO2; this interaction is required for phosphorylation at Ser-11 and Ser-15, and triggers activation by sumoylation and subsequent degradation. Binds to NPR3 and NPR4; these interactions are promoted by association of salicylic acid (SA) with NPR3, but disrupted by SA association with NPR4, probably due to conformational changes. Binds to CUL3A, a core component of the cullin-RING ubiquitin ligases (CRL); this interaction requires NPR3 and NPR4. Interacts with NPR2 independently of SA. Binds to WRKY70 when unmodified (i.e. not sumoylated). Phosphorylation at Ser-55 and Ser-59 prevents sumoylation to ensure stability and quiescence. Post-translationally, phosphorylated at Ser-11 and Ser-15 in the nucleus; facilitates its recruitment to a cullin3-based ubiquitin ligase leading to polyubiquitination and subsequent CUL3/CSN-mediated degradation. This phosphorylation at Ser-11 and Ser-15 requires interaction with SUMO3, and promotes in turn activation by sumoylation and subsequent degradation. In terms of processing, ubiquitinated. Sumoylated by SUMO3 independently of an E3 ligase to activate defense gene expression by switching from association with WRKY transcriptional repressors (e.g. WRKY70) to TGA transcriptional activators (e.g. TGA3). Sumoylation is inhibited by phosphorylation at Ser-55 and Ser-59, but seems to promote phosphorylation at Ser-11 and Ser-15. Sumoylation also triggers degradation, making immune induction transient. Post-translationally, the Cys-82-SH group reacts with Cys-216-SH of the other subunit to form an intermolecular disulfide. This disulfide might subsequently be reduced upon systemic acquired resistance (SAR) induction. In terms of processing, S-nitrosylation at Cys-156 facilitates its oligomerization.

It localises to the cytoplasm. The protein resides in the nucleus. The protein localises to the nuclear body. It participates in protein modification; protein ubiquitination. In terms of biological role, salicylic acid (SA)-binding substrate-specific adapter of an E3 ubiquitin-protein ligase complex (CUL3-RBX1-BTB) which mediates the ubiquitination and subsequent proteasomal degradation of target proteins. Transcription cofactor that represses gene expression in the absence of salicylic acid (SA), when attached to negative cis-elements (W-box) with WRKY transcription factors (e.g. WRKY70), but stimulates gene expression upon activation by SA, when sumoylated and attached to positive cis-elements (as-1) with TGA transcription factors (e.g. TGA3), thus confering immunity through a series of gene regulations ending in a significant increase in antimicrobial and defense genes expression (e.g. PR-1 and PR-2). Binds to SA with low capacity; this leads to conformational changes. Key positive regulator of the SA-dependent signaling pathway that negatively regulates jasmonic acid (JA)-dependent signaling pathway. Controls the onset of systemic acquired resistance (SAR). Upon SAR induction, a biphasic change in cellular reduction potential occurs, resulting in reduction of the cytoplasmic oligomeric form to dimeric and monomeric forms, which accumulate in the nucleus and activate gene expression. Appears to control lesion expansion by acting as an inhibitor of programmed cell death (PCD) during effector-triggered immunity (ETI) that occurs in response to incompatible interaction with avirulent pathogenic bacteria (i.e. Pseudomonas syringae ES4326/avrRpt2) ending in a hypersensitive response (HR). Phosphorylated form is target of proteasome degradation. The polypeptide is Regulatory protein NPR1 (Arabidopsis thaliana (Mouse-ear cress)).